A 496-amino-acid polypeptide reads, in one-letter code: Aspartyl/glutamyl-tRNA(Asn/Gln) amidotransferase subunit B (496 aa).

This sequence belongs to the GatB/GatE family. GatB subfamily. In terms of assembly, heterotrimer of A, B and C subunits.

The catalysed reaction is L-glutamyl-tRNA(Gln) + L-glutamine + ATP + H2O = L-glutaminyl-tRNA(Gln) + L-glutamate + ADP + phosphate + H(+). It catalyses the reaction L-aspartyl-tRNA(Asn) + L-glutamine + ATP + H2O = L-asparaginyl-tRNA(Asn) + L-glutamate + ADP + phosphate + 2 H(+). In terms of biological role, allows the formation of correctly charged Asn-tRNA(Asn) or Gln-tRNA(Gln) through the transamidation of misacylated Asp-tRNA(Asn) or Glu-tRNA(Gln) in organisms which lack either or both of asparaginyl-tRNA or glutaminyl-tRNA synthetases. The reaction takes place in the presence of glutamine and ATP through an activated phospho-Asp-tRNA(Asn) or phospho-Glu-tRNA(Gln). The polypeptide is Aspartyl/glutamyl-tRNA(Asn/Gln) amidotransferase subunit B (Natronomonas pharaonis (strain ATCC 35678 / DSM 2160 / CIP 103997 / JCM 8858 / NBRC 14720 / NCIMB 2260 / Gabara) (Halobacterium pharaonis)).